Here is a 216-residue protein sequence, read N- to C-terminus: Orotate phosphoribosyltransferase (216 aa).

Lysine 30 is a 5-phospho-alpha-D-ribose 1-diphosphate binding site. 38–39 (FF) serves as a coordination point for orotate. 5-phospho-alpha-D-ribose 1-diphosphate-binding positions include 75–76 (YK), arginine 102, lysine 103, lysine 106, histidine 108, and 128–136 (DDVITAGTA). Orotate contacts are provided by threonine 132 and arginine 160.

This sequence belongs to the purine/pyrimidine phosphoribosyltransferase family. PyrE subfamily. In terms of assembly, homodimer. Requires Mg(2+) as cofactor.

The catalysed reaction is orotidine 5'-phosphate + diphosphate = orotate + 5-phospho-alpha-D-ribose 1-diphosphate. The protein operates within pyrimidine metabolism; UMP biosynthesis via de novo pathway; UMP from orotate: step 1/2. In terms of biological role, catalyzes the transfer of a ribosyl phosphate group from 5-phosphoribose 1-diphosphate to orotate, leading to the formation of orotidine monophosphate (OMP). The sequence is that of Orotate phosphoribosyltransferase from Acinetobacter baylyi (strain ATCC 33305 / BD413 / ADP1).